Here is a 292-residue protein sequence, read N- to C-terminus: Phosphatidylglycerol--prolipoprotein diacylglyceryl transferase (292 aa).

The next 4 helical transmembrane spans lie at 7–27 (IILS…FLRE), 45–65 (FQLR…YVLA), 83–103 (LFWG…IFNW), and 116–136 (IWHG…MIFI). Arg165 contributes to the a 1,2-diacyl-sn-glycero-3-phospho-(1'-sn-glycerol) binding site. 2 helical membrane-spanning segments follow: residues 204–224 (PTFL…YFFV) and 264–284 (AAQV…AYII).

It belongs to the Lgt family.

The protein resides in the cell inner membrane. It carries out the reaction L-cysteinyl-[prolipoprotein] + a 1,2-diacyl-sn-glycero-3-phospho-(1'-sn-glycerol) = an S-1,2-diacyl-sn-glyceryl-L-cysteinyl-[prolipoprotein] + sn-glycerol 1-phosphate + H(+). The protein operates within protein modification; lipoprotein biosynthesis (diacylglyceryl transfer). Catalyzes the transfer of the diacylglyceryl group from phosphatidylglycerol to the sulfhydryl group of the N-terminal cysteine of a prolipoprotein, the first step in the formation of mature lipoproteins. The protein is Phosphatidylglycerol--prolipoprotein diacylglyceryl transferase of Fervidobacterium nodosum (strain ATCC 35602 / DSM 5306 / Rt17-B1).